The following is a 599-amino-acid chain: Elongation factor 4 (599 aa).

The tr-type G domain occupies 2 to 184 (KNIRNFSIIA…RLVRDIPPPE (183 aa)). Residues 14 to 19 (DHGKST) and 131 to 134 (NKID) each bind GTP.

Belongs to the TRAFAC class translation factor GTPase superfamily. Classic translation factor GTPase family. LepA subfamily.

The protein localises to the cell inner membrane. It carries out the reaction GTP + H2O = GDP + phosphate + H(+). In terms of biological role, required for accurate and efficient protein synthesis under certain stress conditions. May act as a fidelity factor of the translation reaction, by catalyzing a one-codon backward translocation of tRNAs on improperly translocated ribosomes. Back-translocation proceeds from a post-translocation (POST) complex to a pre-translocation (PRE) complex, thus giving elongation factor G a second chance to translocate the tRNAs correctly. Binds to ribosomes in a GTP-dependent manner. The polypeptide is Elongation factor 4 (Shigella sonnei (strain Ss046)).